The primary structure comprises 402 residues: Nicotinate phosphoribosyltransferase (402 aa).

His226 bears the Phosphohistidine; by autocatalysis mark.

It belongs to the NAPRTase family. Post-translationally, transiently phosphorylated on a His residue during the reaction cycle. Phosphorylation strongly increases the affinity for substrates and increases the rate of nicotinate D-ribonucleotide production. Dephosphorylation regenerates the low-affinity form of the enzyme, leading to product release.

It carries out the reaction nicotinate + 5-phospho-alpha-D-ribose 1-diphosphate + ATP + H2O = nicotinate beta-D-ribonucleotide + ADP + phosphate + diphosphate. It participates in cofactor biosynthesis; NAD(+) biosynthesis; nicotinate D-ribonucleotide from nicotinate: step 1/1. Catalyzes the synthesis of beta-nicotinate D-ribonucleotide from nicotinate and 5-phospho-D-ribose 1-phosphate at the expense of ATP. The protein is Nicotinate phosphoribosyltransferase of Chromobacterium violaceum (strain ATCC 12472 / DSM 30191 / JCM 1249 / CCUG 213 / NBRC 12614 / NCIMB 9131 / NCTC 9757 / MK).